The chain runs to 344 residues: Phenylalanine--tRNA ligase alpha subunit (344 aa).

Glutamate 255 is a Mg(2+) binding site.

This sequence belongs to the class-II aminoacyl-tRNA synthetase family. Phe-tRNA synthetase alpha subunit type 1 subfamily. Tetramer of two alpha and two beta subunits. Mg(2+) is required as a cofactor.

It is found in the cytoplasm. It carries out the reaction tRNA(Phe) + L-phenylalanine + ATP = L-phenylalanyl-tRNA(Phe) + AMP + diphosphate + H(+). The chain is Phenylalanine--tRNA ligase alpha subunit from Persephonella marina (strain DSM 14350 / EX-H1).